A 129-amino-acid chain; its full sequence is L-ectoine synthase (129 aa).

It belongs to the ectoine synthase family.

The enzyme catalyses (2S)-4-acetamido-2-aminobutanoate = L-ectoine + H2O. Its pathway is amine and polyamine biosynthesis; ectoine biosynthesis; L-ectoine from L-aspartate 4-semialdehyde: step 3/3. In terms of biological role, catalyzes the circularization of gamma-N-acetyl-alpha,gamma-diaminobutyric acid (ADABA) to ectoine (1,4,5,6-tetrahydro-2-methyl-4-pyrimidine carboxylic acid), which is an excellent osmoprotectant. This Halalkalibacterium halodurans (strain ATCC BAA-125 / DSM 18197 / FERM 7344 / JCM 9153 / C-125) (Bacillus halodurans) protein is L-ectoine synthase.